The following is a 78-amino-acid chain: Large ribosomal subunit protein bL28 (78 aa).

A disordered region spans residues 1–23 (MSRVCQVSGKRVQTGNNVSHANN). Over residues 11-22 (RVQTGNNVSHAN) the composition is skewed to polar residues.

The protein belongs to the bacterial ribosomal protein bL28 family.

This is Large ribosomal subunit protein bL28 from Xanthomonas campestris pv. campestris (strain 8004).